Here is a 481-residue protein sequence, read N- to C-terminus: Putative F-box/FBD/LRR-repeat protein At5g25850 (481 aa).

An F-box domain is found at 19–69; the sequence is INRLSQLSDPLICQILSHLPIKEVVTTSVLSTRWKNIWLSVPSLELIYSIF. LRR repeat units follow at residues 123-151, 173-198, and 328-356; these read VRRVRGNYFHELPLSLYVCETLVSLKLFH, VWFPNDATFERLVSSCPVLEDLKIDV, and HVTLRVSELKWLPNFLECCPNLKSLIVAF. In terms of domain architecture, FBD spans 401–452; that stretch reads QLSFSSVPKCLLSSLQFVELNAQILRFDGEILNLAKYFLENSSILQKLTLHP.

The protein is Putative F-box/FBD/LRR-repeat protein At5g25850 of Arabidopsis thaliana (Mouse-ear cress).